The chain runs to 327 residues: Biotin synthase (327 aa).

The Radical SAM core domain maps to 52-279 (TKVQLSTLVS…ASYVRLSAGR (228 aa)). Residues C67, C71, and C74 each contribute to the [4Fe-4S] cluster site. [2Fe-2S] cluster is bound by residues C111, C142, C202, and R274.

The protein belongs to the radical SAM superfamily. Biotin synthase family. Homodimer. [4Fe-4S] cluster serves as cofactor. It depends on [2Fe-2S] cluster as a cofactor.

The enzyme catalyses (4R,5S)-dethiobiotin + (sulfur carrier)-SH + 2 reduced [2Fe-2S]-[ferredoxin] + 2 S-adenosyl-L-methionine = (sulfur carrier)-H + biotin + 2 5'-deoxyadenosine + 2 L-methionine + 2 oxidized [2Fe-2S]-[ferredoxin]. It participates in cofactor biosynthesis; biotin biosynthesis; biotin from 7,8-diaminononanoate: step 2/2. Its function is as follows. Catalyzes the conversion of dethiobiotin (DTB) to biotin by the insertion of a sulfur atom into dethiobiotin via a radical-based mechanism. In Chromobacterium violaceum (strain ATCC 12472 / DSM 30191 / JCM 1249 / CCUG 213 / NBRC 12614 / NCIMB 9131 / NCTC 9757 / MK), this protein is Biotin synthase.